A 180-amino-acid chain; its full sequence is Ribulose bisphosphate carboxylase small subunit, chloroplastic (180 aa).

Residues Met-1–Gln-56 constitute a chloroplast transit peptide.

The protein belongs to the RuBisCO small chain family. Heterohexadecamer of 8 large and 8 small subunits.

The protein localises to the plastid. It localises to the chloroplast. Functionally, ruBisCO catalyzes two reactions: the carboxylation of D-ribulose 1,5-bisphosphate, the primary event in carbon dioxide fixation, as well as the oxidative fragmentation of the pentose substrate. Both reactions occur simultaneously and in competition at the same active site. Although the small subunit is not catalytic it is essential for maximal activity. In Nicotiana plumbaginifolia (Leadwort-leaved tobacco), this protein is Ribulose bisphosphate carboxylase small subunit, chloroplastic.